The following is a 782-amino-acid chain: uncharacterized protein (782 aa).

A DNA-binding region (zn(2)-C6 fungal-type) is located at residues 22–50 (CRECHRLKLKCDRVWPCENCKKRGIPNLC). 2 disordered regions span residues 105-126 (GEKP…DPDH) and 645-665 (VPSS…AEKA). Residues 654 to 665 (SPDDSSMRAEKA) show a composition bias toward basic and acidic residues.

It is found in the nucleus. This is an uncharacterized protein from Schizosaccharomyces pombe (strain 972 / ATCC 24843) (Fission yeast).